Consider the following 497-residue polypeptide: Probable cytosol aminopeptidase (497 aa).

Residues lysine 267 and aspartate 272 each contribute to the Mn(2+) site. Lysine 279 is an active-site residue. Mn(2+) contacts are provided by aspartate 290, aspartate 349, and glutamate 351. Arginine 353 is a catalytic residue.

Belongs to the peptidase M17 family. It depends on Mn(2+) as a cofactor.

The protein localises to the cytoplasm. The catalysed reaction is Release of an N-terminal amino acid, Xaa-|-Yaa-, in which Xaa is preferably Leu, but may be other amino acids including Pro although not Arg or Lys, and Yaa may be Pro. Amino acid amides and methyl esters are also readily hydrolyzed, but rates on arylamides are exceedingly low.. The enzyme catalyses Release of an N-terminal amino acid, preferentially leucine, but not glutamic or aspartic acids.. Functionally, presumably involved in the processing and regular turnover of intracellular proteins. Catalyzes the removal of unsubstituted N-terminal amino acids from various peptides. This chain is Probable cytosol aminopeptidase, found in Nitrosomonas eutropha (strain DSM 101675 / C91 / Nm57).